The chain runs to 242 residues: Probable transcriptional regulatory protein BamMC406_2210 (242 aa).

The protein belongs to the TACO1 family.

The protein localises to the cytoplasm. The sequence is that of Probable transcriptional regulatory protein BamMC406_2210 from Burkholderia ambifaria (strain MC40-6).